The chain runs to 327 residues: Gamma-resorcylate decarboxylase (327 aa).

Zn(2+) is bound by residues Glu8 and His10. Positions 23, 164, and 287 each coordinate 2,6-dihydroxybenzoate. Zn(2+) is bound by residues His164 and Asp287. Asp287 is an active-site residue.

It belongs to the metallo-dependent hydrolases superfamily. ACMSD family. Homotetramer. Dimer of dimers. The cofactor is Zn(2+).

It catalyses the reaction 2,6-dihydroxybenzoate + H(+) = resorcinol + CO2. The enzyme catalyses 2,3-dihydroxybenzoate + H(+) = catechol + CO2. It participates in aromatic compound metabolism. Its activity is regulated as follows. Inhibited by CuCl(2), monoiodoacetate and diethylpyrocarbonate. Inhibited by 2,3-dihydroxybenzaldehyde, which is an analog of the substrate 2,3-dihydroxybenzoate. Its function is as follows. Involved in the gamma-resorcylate (2,6-dihydroxybenzoate) catabolism. Catalyzes the reversible decarboxylation of gamma-resorcylate to resorcinol. The reaction is reversible, but equilibrium greatly favors the decarboxylation reaction. Also catalyzes the decarboxylation of 2,3-dihydroxybenzoate to catechol, but does not act on 2,4-dihydroxybenzoate, 2,5-dihydroxybenzoate, 3,4-dihydroxybenzoate, 3,5-dihydroxybenzoate, 2-hydroxybenzoate, or 3-hydroxybenzoate. Only resorcinol is carboxylated by the reverse reaction. In Rhizobium sp. (strain MTP-10005), this protein is Gamma-resorcylate decarboxylase.